We begin with the raw amino-acid sequence, 245 residues long: Small ribosomal subunit protein uS3 (245 aa).

The region spanning 21 to 92 (LNEFLTRELA…SVELYAEKVA (72 aa)) is the KH type-2 domain. The segment at 215–245 (EEILPTTPVSEQKGAKPEVPVMPQGAPVPTA) is disordered.

It belongs to the universal ribosomal protein uS3 family.

It localises to the cytoplasm. Its subcellular location is the nucleus. The protein localises to the nucleolus. It is found in the mitochondrion inner membrane. The protein resides in the cytoskeleton. It localises to the spindle. It carries out the reaction 2'-deoxyribonucleotide-(2'-deoxyribose 5'-phosphate)-2'-deoxyribonucleotide-DNA = a 3'-end 2'-deoxyribonucleotide-(2,3-dehydro-2,3-deoxyribose 5'-phosphate)-DNA + a 5'-end 5'-phospho-2'-deoxyribonucleoside-DNA + H(+). Component of the small ribosomal subunit. The ribosome is a large ribonucleoprotein complex responsible for the synthesis of proteins in the cell. Has endonuclease activity and plays a role in repair of damaged DNA. Also involved in other processes including regulation of transcription, translation of its cognate mRNA, spindle formation and chromosome movement during mitosis, and apoptosis. The polypeptide is Small ribosomal subunit protein uS3 (rps3) (Ictalurus punctatus (Channel catfish)).